The following is a 165-amino-acid chain: uncharacterized protein (165 aa).

The chain crosses the membrane as a helical span at residues 16–36; sequence ASISSILNFFFFYIMEYFVAV.

It belongs to the asfivirus F165R family.

It localises to the host membrane. This is an uncharacterized protein from Ornithodoros (relapsing fever ticks).